We begin with the raw amino-acid sequence, 97 residues long: Co-chaperonin GroES (97 aa).

The protein belongs to the GroES chaperonin family. Heptamer of 7 subunits arranged in a ring. Interacts with the chaperonin GroEL.

It localises to the cytoplasm. Its function is as follows. Together with the chaperonin GroEL, plays an essential role in assisting protein folding. The GroEL-GroES system forms a nano-cage that allows encapsulation of the non-native substrate proteins and provides a physical environment optimized to promote and accelerate protein folding. GroES binds to the apical surface of the GroEL ring, thereby capping the opening of the GroEL channel. The polypeptide is Co-chaperonin GroES (Buchnera aphidicola subsp. Baizongia pistaciae (strain Bp)).